Here is a 362-residue protein sequence, read N- to C-terminus: 3-isopropylmalate dehydrogenase (362 aa).

76–87 (GPKWGTGSVRPE) contributes to the NAD(+) binding site. The substrate site is built by Arg-94, Arg-104, Arg-133, and Asp-222. Asp-222, Asp-247, and Asp-251 together coordinate Mg(2+). NAD(+) is bound at residue 286-297 (GSAPDLGPGKVN).

This sequence belongs to the isocitrate and isopropylmalate dehydrogenases family. Homodimer. Mg(2+) is required as a cofactor. The cofactor is Mn(2+).

The protein localises to the cytoplasm. It catalyses the reaction (2R,3S)-3-isopropylmalate + NAD(+) = 4-methyl-2-oxopentanoate + CO2 + NADH. The protein operates within amino-acid biosynthesis; L-leucine biosynthesis; L-leucine from 3-methyl-2-oxobutanoate: step 3/4. Functionally, catalyzes the oxidation of 3-carboxy-2-hydroxy-4-methylpentanoate (3-isopropylmalate) to 3-carboxy-4-methyl-2-oxopentanoate. The product decarboxylates to 4-methyl-2 oxopentanoate. In Pichia angusta (Yeast), this protein is 3-isopropylmalate dehydrogenase (LEU2).